Reading from the N-terminus, the 376-residue chain is Glutamate 5-kinase (376 aa).

Lysine 23 provides a ligand contact to ATP. Substrate-binding residues include serine 63, aspartate 150, and asparagine 162. ATP is bound by residues 182–183 (SD) and 222–228 (TGGMASK). The region spanning 284-358 (GGALRIDAGA…GKQTAQLPEG (75 aa)) is the PUA domain.

The protein belongs to the glutamate 5-kinase family.

The protein localises to the cytoplasm. It carries out the reaction L-glutamate + ATP = L-glutamyl 5-phosphate + ADP. It functions in the pathway amino-acid biosynthesis; L-proline biosynthesis; L-glutamate 5-semialdehyde from L-glutamate: step 1/2. In terms of biological role, catalyzes the transfer of a phosphate group to glutamate to form L-glutamate 5-phosphate. This chain is Glutamate 5-kinase, found in Corynebacterium diphtheriae (strain ATCC 700971 / NCTC 13129 / Biotype gravis).